The primary structure comprises 669 residues: UvrABC system protein B (669 aa).

Residues 26 to 414 enclose the Helicase ATP-binding domain; it reads TNFHAGIAKQ…AGEVIELLVR (389 aa). An ATP-binding site is contributed by 39–46; it reads GVTGSGKT. Residues 92–115 carry the Beta-hairpin motif; it reads YYDYYQPEAYVPASDTFIEKDSSI. Residues 435 to 597 form the Helicase C-terminal domain; the sequence is LISQINVCIK…SVVRPISDIL (163 aa). One can recognise a UVR domain in the interval 631–666; it reads AAQMKVLEQQMYQHARDLEFEDAARIRDQIQRLREA.

Belongs to the UvrB family. As to quaternary structure, forms a heterotetramer with UvrA during the search for lesions. Interacts with UvrC in an incision complex.

It localises to the cytoplasm. The UvrABC repair system catalyzes the recognition and processing of DNA lesions. A damage recognition complex composed of 2 UvrA and 2 UvrB subunits scans DNA for abnormalities. Upon binding of the UvrA(2)B(2) complex to a putative damaged site, the DNA wraps around one UvrB monomer. DNA wrap is dependent on ATP binding by UvrB and probably causes local melting of the DNA helix, facilitating insertion of UvrB beta-hairpin between the DNA strands. Then UvrB probes one DNA strand for the presence of a lesion. If a lesion is found the UvrA subunits dissociate and the UvrB-DNA preincision complex is formed. This complex is subsequently bound by UvrC and the second UvrB is released. If no lesion is found, the DNA wraps around the other UvrB subunit that will check the other stand for damage. The sequence is that of UvrABC system protein B from Xylella fastidiosa (strain 9a5c).